Here is a 108-residue protein sequence, read N- to C-terminus: Nucleoid-associated protein GWCH70_0020 (108 aa).

The tract at residues 1 to 34 (MMRGGMGNMQKMMKQMQKMQKEMQKAQEQLAEKT) is disordered. The segment covering 9 to 18 (MQKMMKQMQK) has biased composition (low complexity). A compositionally biased stretch (basic and acidic residues) spans 19–34 (MQKEMQKAQEQLAEKT).

This sequence belongs to the YbaB/EbfC family. In terms of assembly, homodimer.

The protein resides in the cytoplasm. Its subcellular location is the nucleoid. Binds to DNA and alters its conformation. May be involved in regulation of gene expression, nucleoid organization and DNA protection. This is Nucleoid-associated protein GWCH70_0020 from Geobacillus sp. (strain WCH70).